The sequence spans 619 residues: 1-deoxy-D-xylulose-5-phosphate synthase (619 aa).

Thiamine diphosphate contacts are provided by residues histidine 76 and 117–119; that span reads AHS. Position 148 (aspartate 148) interacts with Mg(2+). Thiamine diphosphate is bound by residues 149-150, asparagine 177, tyrosine 284, and glutamate 366; that span reads GA. Asparagine 177 serves as a coordination point for Mg(2+).

Belongs to the transketolase family. DXPS subfamily. As to quaternary structure, homodimer. The cofactor is Mg(2+). Requires thiamine diphosphate as cofactor.

The catalysed reaction is D-glyceraldehyde 3-phosphate + pyruvate + H(+) = 1-deoxy-D-xylulose 5-phosphate + CO2. It participates in metabolic intermediate biosynthesis; 1-deoxy-D-xylulose 5-phosphate biosynthesis; 1-deoxy-D-xylulose 5-phosphate from D-glyceraldehyde 3-phosphate and pyruvate: step 1/1. Catalyzes the acyloin condensation reaction between C atoms 2 and 3 of pyruvate and glyceraldehyde 3-phosphate to yield 1-deoxy-D-xylulose-5-phosphate (DXP). This chain is 1-deoxy-D-xylulose-5-phosphate synthase, found in Azoarcus sp. (strain BH72).